We begin with the raw amino-acid sequence, 433 residues long: Chitinase-like protein EN03 (433 aa).

The signal sequence occupies residues M1–A16. The region spanning S23–L433 is the GH18 domain. The cysteines at positions 27 and 54 are disulfide-linked. N-linked (GlcNAc...) asparagine glycosylation is present at N220. The cysteines at positions 337 and 418 are disulfide-linked.

It belongs to the glycosyl hydrolase 18 family. IDGF subfamily.

It is found in the secreted. This chain is Chitinase-like protein EN03, found in Bombyx mori (Silk moth).